Consider the following 333-residue polypeptide: Glycerol-3-phosphate dehydrogenase [NAD(P)+] (333 aa).

NADPH contacts are provided by W13, K33, and K108. Residues K108 and G138 each coordinate sn-glycerol 3-phosphate. S142 is a binding site for NADPH. The sn-glycerol 3-phosphate site is built by K193, D246, S256, R257, and N258. The active-site Proton acceptor is K193. R257 contacts NADPH. 2 residues coordinate NADPH: V281 and E283.

It belongs to the NAD-dependent glycerol-3-phosphate dehydrogenase family.

The protein resides in the cytoplasm. It carries out the reaction sn-glycerol 3-phosphate + NAD(+) = dihydroxyacetone phosphate + NADH + H(+). The enzyme catalyses sn-glycerol 3-phosphate + NADP(+) = dihydroxyacetone phosphate + NADPH + H(+). It functions in the pathway membrane lipid metabolism; glycerophospholipid metabolism. In terms of biological role, catalyzes the reduction of the glycolytic intermediate dihydroxyacetone phosphate (DHAP) to sn-glycerol 3-phosphate (G3P), the key precursor for phospholipid synthesis. This is Glycerol-3-phosphate dehydrogenase [NAD(P)+] from Bifidobacterium longum (strain DJO10A).